Consider the following 392-residue polypeptide: Chalcone synthase B (392 aa).

Residue Cys-167 is part of the active site.

This sequence belongs to the thiolase-like superfamily. Chalcone/stilbene synthases family. Expressed at low level in seedlings after illumination with UV light. No expression in flowers or tissue culture.

It catalyses the reaction (E)-4-coumaroyl-CoA + 3 malonyl-CoA + 3 H(+) = 2',4,4',6'-tetrahydroxychalcone + 3 CO2 + 4 CoA. The protein operates within secondary metabolite biosynthesis; flavonoid biosynthesis. The primary product of this enzyme is 4,2',4',6'-tetrahydroxychalcone (also termed naringenin-chalcone or chalcone) which can under specific conditions spontaneously isomerize into naringenin. In Petunia hybrida (Petunia), this protein is Chalcone synthase B (CHSB).